Consider the following 474-residue polypeptide: Lipoprotein lipase (474 aa).

The signal sequence occupies residues 1-27; it reads MESKALLLVVLGVWLQSLTAFRGGVAA. The segment at 32–53 is interaction with GPIHBP1; that stretch reads RDFSDIESKFALRTPEDTAEDT. A disulfide bridge links cysteine 54 with cysteine 67. An N-linked (GlcNAc...) asparagine glycan is attached at asparagine 70. Tyrosine 121 is modified (3'-nitrotyrosine). The active-site Nucleophile is the serine 159. Aspartate 183 acts as the Charge relay system in catalysis. Tyrosine 191 is modified (3'-nitrotyrosine). Residues alanine 194, arginine 197, serine 199, and aspartate 202 each contribute to the Ca(2+) site. A disulfide bridge connects residues cysteine 243 and cysteine 266. The segment at 243-266 is essential for determining substrate specificity; sequence CNIGEAIRVIAERGLGDVDQLVKC. Catalysis depends on histidine 268, which acts as the Charge relay system. Cystine bridges form between cysteine 291–cysteine 310 and cysteine 302–cysteine 305. In terms of domain architecture, PLAT spans 341–464; sequence FHYQVKIHFS…KGKDSAVFVK (124 aa). The residue at position 343 (tyrosine 343) is a 3'-nitrotyrosine. Residue asparagine 386 is glycosylated (N-linked (GlcNAc...) asparagine). An important for interaction with lipoprotein particles region spans residues 417 to 421; sequence WPDWW. Residues 430 to 434 are important for heparin binding; that stretch reads RIRVK. The tract at residues 443–467 is interaction with GPIHBP1; that stretch reads IFCAREKVSHLQKGKDSAVFVKCHD. A disulfide bridge links cysteine 445 with cysteine 465.

Belongs to the AB hydrolase superfamily. Lipase family. As to quaternary structure, homodimer. Interacts with GPIHBP1 with 1:1 stoichiometry. Interacts with APOC2; the interaction activates LPL activity in the presence of lipids. Interaction with heparan sulfate proteoglycans is required to protect LPL against loss of activity. Associates with lipoprotein particles in blood plasma. Interacts with LMF1 and SEL1L; interaction with SEL1L is required to prevent aggregation of newly synthesized LPL in the endoplasmic reticulum (ER), and for normal export of LPL from the ER to the extracellular space. Interacts with SORL1; SORL1 acts as a sorting receptor, promoting LPL localization to endosomes and later to lysosomes, leading to degradation of newly synthesized LPL. Tyrosine nitration after lipopolysaccharide (LPS) challenge down-regulates the lipase activity. Post-translationally, N-glycosylated. In terms of tissue distribution, detected in white and brown adipose tissue and heart muscle, especially at the lumenal surface of capillaries. Detected on capillary endothelium in the lactating mammary gland. Detected in blood plasma (at protein level). Expressed in liver, epididymal fat, heart, psoas muscle, lactating mammary gland, adrenal, lung, and ovary. Highest levels in heart and adrenal gland.

It is found in the cell membrane. Its subcellular location is the secreted. It localises to the extracellular space. The protein resides in the extracellular matrix. The catalysed reaction is a triacylglycerol + H2O = a diacylglycerol + a fatty acid + H(+). The enzyme catalyses a 1,2-diacyl-sn-glycero-3-phosphocholine + H2O = a 2-acyl-sn-glycero-3-phosphocholine + a fatty acid + H(+). It carries out the reaction 1,2,3-tri-(9Z-octadecenoyl)-glycerol + H2O = di-(9Z)-octadecenoylglycerol + (9Z)-octadecenoate + H(+). It catalyses the reaction 1,2-di-(9Z-octadecenoyl)-sn-glycero-3-phosphocholine + H2O = (9Z-octadecenoyl)-sn-glycero-3-phosphocholine + (9Z)-octadecenoate + H(+). The catalysed reaction is 1,2,3-tributanoylglycerol + H2O = dibutanoylglycerol + butanoate + H(+). The enzyme catalyses 1,2-dihexadecanoyl-sn-glycero-3-phosphocholine + H2O = hexadecanoyl-sn-glycero-3-phosphocholine + hexadecanoate + H(+). Its activity is regulated as follows. The apolipoprotein APOC2 acts as a coactivator of LPL activity. Ca(2+) binding promotes protein stability and formation of the active homodimer. Interaction with GPIHBP1 protects LPL against inactivation by ANGPTL4. Key enzyme in triglyceride metabolism. Catalyzes the hydrolysis of triglycerides from circulating chylomicrons and very low density lipoproteins (VLDL), and thereby plays an important role in lipid clearance from the blood stream, lipid utilization and storage. Although it has both phospholipase and triglyceride lipase activities it is primarily a triglyceride lipase with low but detectable phospholipase activity. Mediates margination of triglyceride-rich lipoprotein particles in capillaries. Recruited to its site of action on vascular endothelium by binding to GPIHBP1 and cell surface heparan sulfate proteoglycans. The protein is Lipoprotein lipase (Lpl) of Mus musculus (Mouse).